The sequence spans 438 residues: 3-phosphoshikimate 1-carboxyvinyltransferase (438 aa).

3-phosphoshikimate-binding residues include K25, S26, and R30. Position 25 (K25) interacts with phosphoenolpyruvate. Phosphoenolpyruvate contacts are provided by G99 and R128. Residues S173, Q175, D325, and K352 each contribute to the 3-phosphoshikimate site. Q175 serves as a coordination point for phosphoenolpyruvate. The active-site Proton acceptor is the D325. The phosphoenolpyruvate site is built by R356 and R398.

It belongs to the EPSP synthase family. In terms of assembly, monomer.

It localises to the cytoplasm. The enzyme catalyses 3-phosphoshikimate + phosphoenolpyruvate = 5-O-(1-carboxyvinyl)-3-phosphoshikimate + phosphate. The protein operates within metabolic intermediate biosynthesis; chorismate biosynthesis; chorismate from D-erythrose 4-phosphate and phosphoenolpyruvate: step 6/7. Functionally, catalyzes the transfer of the enolpyruvyl moiety of phosphoenolpyruvate (PEP) to the 5-hydroxyl of shikimate-3-phosphate (S3P) to produce enolpyruvyl shikimate-3-phosphate and inorganic phosphate. This chain is 3-phosphoshikimate 1-carboxyvinyltransferase, found in Prochlorococcus marinus (strain MIT 9515).